Here is a 49-residue protein sequence, read N- to C-terminus: Photosystem I reaction center subunit IX (49 aa).

A helical transmembrane segment spans residues 14 to 34 (FISTAPVAATIWLTITAGILI).

This sequence belongs to the PsaJ family.

Its subcellular location is the cellular thylakoid membrane. Functionally, may help in the organization of the PsaE and PsaF subunits. The sequence is that of Photosystem I reaction center subunit IX from Nostoc punctiforme (strain ATCC 29133 / PCC 73102).